The sequence spans 320 residues: Membrane protein insertase YidC 2 (320 aa).

The first 23 residues, 1 to 23 (MKNLKKKLTLTGLMTAGLLFLSG), serve as a signal peptide directing secretion. A lipid anchor (N-palmitoyl cysteine) is attached at C24. Residue C24 is the site of S-diacylglycerol cysteine attachment. The next 5 membrane-spanning stretches (helical) occupy residues 68 to 88 (YGWGIIFVTLIIRFLILPLGL), 142 to 162 (MLSSIGCLPMLIQWPFFIALY), 178 to 198 (GIPLGHPSVVLVIISGVLYFI), 217 to 237 (AMLIMSPAMIVVFSFMSPAGV), and 239 to 259 (LYWAVGGFVIVIQQIIITFIM). The segment at 270 to 320 (EFTKNPPKINNEGLKDVTPTSVQENFKEITSERNEKERKSGGRNAGKQNRK) is disordered. The segment covering 294 to 309 (NFKEITSERNEKERKS) has biased composition (basic and acidic residues).

Belongs to the OXA1/ALB3/YidC family. Type 2 subfamily.

The protein resides in the cell membrane. Required for the insertion and/or proper folding and/or complex formation of integral membrane proteins into the membrane. Involved in integration of membrane proteins that insert both dependently and independently of the Sec translocase complex, as well as at least some lipoproteins. The protein is Membrane protein insertase YidC 2 of Lactococcus lactis subsp. lactis (strain IL1403) (Streptococcus lactis).